The following is a 295-amino-acid chain: Small ribosomal subunit biogenesis GTPase RsgA (295 aa).

Residues 68–228 (KNLLVKPHVA…VVDTPGFANL (161 aa)) enclose the CP-type G domain. Residues 117 to 120 (NKMD) and 170 to 178 (GLSGVGKSS) each bind GTP. Positions 250, 255, 257, and 263 each coordinate Zn(2+).

This sequence belongs to the TRAFAC class YlqF/YawG GTPase family. RsgA subfamily. Monomer. Associates with 30S ribosomal subunit, binds 16S rRNA. It depends on Zn(2+) as a cofactor.

The protein localises to the cytoplasm. In terms of biological role, one of several proteins that assist in the late maturation steps of the functional core of the 30S ribosomal subunit. Helps release RbfA from mature subunits. May play a role in the assembly of ribosomal proteins into the subunit. Circularly permuted GTPase that catalyzes slow GTP hydrolysis, GTPase activity is stimulated by the 30S ribosomal subunit. This chain is Small ribosomal subunit biogenesis GTPase RsgA, found in Thermotoga neapolitana (strain ATCC 49049 / DSM 4359 / NBRC 107923 / NS-E).